The sequence spans 203 residues: MVSTYRVAVLGARGVGKSAIVRQFLYNEFSEVCVPTTARRLYLPAVVMNGHVHDLQILDFPPISAFPVNTLQEWADTCCRGLRSVHAYILVYDICCFDSFEYVKTIRQQILETRVIGTSETPIIIVGNKRDLQRGRVIPRWNVSHLVRKTWKCGYVECSAKYNWHILLLFSELLKSVGCARCKHVHAALRFQGALRRNRCAIM.

A small GTPase-like region spans residues Met1–Met203. GTP is bound at residue Gly11 to Ser18. Residues Cys33–Tyr42 carry the Effector region motif. GTP-binding positions include Asp59–Pro62 and Asn128–Asp131. A Cysteine methyl ester modification is found at Cys200. Residue Cys200 is the site of S-geranylgeranyl cysteine attachment. The propeptide at Ala201–Met203 is removed in mature form.

The protein belongs to the small GTPase superfamily. Ras family. Interacts with CADPS. As to expression, expressed at high levels in skeletal muscle and, at much lower levels, in heart, brain and pancreas.

Its subcellular location is the cell membrane. It catalyses the reaction GTP + H2O = GDP + phosphate + H(+). Its function is as follows. May facilitate the release of atrial natriuretic peptide by cardiomyocytes and hence play a role in the regulation of arterial pressure. This is Ras-like protein family member 10B (RASL10B) from Homo sapiens (Human).